A 325-amino-acid polypeptide reads, in one-letter code: Diadenosine 5',5'''-P1,P4-tetraphosphate phosphorylase 2 (325 aa).

Residues Lys53, 92-93 (NK), Asn148, and 154-157 (GSSQ) contribute to the substrate site. His161 functions as the Nucleophile in the catalytic mechanism. Substrate contacts are provided by residues Gln163, 277 to 279 (NST), Met284, and Lys288.

It belongs to the ATP adenylyltransferase family. In terms of assembly, monomer. Requires a divalent metal cation as cofactor.

The protein resides in the cytoplasm. It localises to the nucleus. It catalyses the reaction ADP + ATP + H(+) = P(1),P(4)-bis(5'-adenosyl) tetraphosphate + phosphate. The catalysed reaction is sulfate + ADP + H(+) = adenosine 5'-phosphosulfate + phosphate. In terms of biological role, ap4A phosphorylase catalyzes the phosphorolytic degradation of bis(5'-adenosyl) tetraphosphate (Ap4A) into ADP and ATP. Can also use other Np4N' nucleotides (where N and N' stand for A,C,G or U) as substrates, but prefers A-containing substrates. Cannot catalyze the reverse reaction. Additionally, this enzyme can also catalyze the phosphorolytic degradation of adenosine 5'-phosphosulfate (AMPS) into ADP and sulfate, the reversible exchange reaction between inorganic phosphate and the beta-phosphate of a nucleoside diphosphate (NDP), and the synthesis of Ap4A from AMPS plus ATP. The polypeptide is Diadenosine 5',5'''-P1,P4-tetraphosphate phosphorylase 2 (Saccharomyces cerevisiae (strain ATCC 204508 / S288c) (Baker's yeast)).